Reading from the N-terminus, the 296-residue chain is NAD kinase (296 aa).

Catalysis depends on D72, which acts as the Proton acceptor. Residues 72–73, 146–147, R157, R174, D176, 187–192, and Q247 contribute to the NAD(+) site; these read DG, ND, and TAYALS.

This sequence belongs to the NAD kinase family. A divalent metal cation is required as a cofactor.

It is found in the cytoplasm. It catalyses the reaction NAD(+) + ATP = ADP + NADP(+) + H(+). Involved in the regulation of the intracellular balance of NAD and NADP, and is a key enzyme in the biosynthesis of NADP. Catalyzes specifically the phosphorylation on 2'-hydroxyl of the adenosine moiety of NAD to yield NADP. The protein is NAD kinase of Hahella chejuensis (strain KCTC 2396).